The primary structure comprises 146 residues: Putative inactive cytochrome P450 2G1 (146 aa).

C91 serves as a coordination point for heme.

Belongs to the cytochrome P450 family. Requires heme as cofactor.

The polypeptide is Putative inactive cytochrome P450 2G1 (CYP2G1P) (Homo sapiens (Human)).